Consider the following 188-residue polypeptide: Peptidyl-tRNA hydrolase (188 aa).

Tyr-14 is a tRNA binding site. Catalysis depends on His-19, which acts as the Proton acceptor. TRNA-binding residues include Tyr-64, Asn-66, and Asn-112.

It belongs to the PTH family. As to quaternary structure, monomer.

Its subcellular location is the cytoplasm. It carries out the reaction an N-acyl-L-alpha-aminoacyl-tRNA + H2O = an N-acyl-L-amino acid + a tRNA + H(+). Hydrolyzes ribosome-free peptidyl-tRNAs (with 1 or more amino acids incorporated), which drop off the ribosome during protein synthesis, or as a result of ribosome stalling. In terms of biological role, catalyzes the release of premature peptidyl moieties from peptidyl-tRNA molecules trapped in stalled 50S ribosomal subunits, and thus maintains levels of free tRNAs and 50S ribosomes. This Bacillus licheniformis (strain ATCC 14580 / DSM 13 / JCM 2505 / CCUG 7422 / NBRC 12200 / NCIMB 9375 / NCTC 10341 / NRRL NRS-1264 / Gibson 46) protein is Peptidyl-tRNA hydrolase.